We begin with the raw amino-acid sequence, 1014 residues long: Chondroitin sulfate ABC exolyase (1014 aa).

The first 14 residues, 1–14, serve as a signal peptide directing secretion; the sequence is MLILSFLCPAFLNA. Residues S24, E26, D50, H53, and D161 each coordinate Ca(2+). Residues H345 and H454 each act as proton acceptor in the active site. Residue Y461 is the Proton donor of the active site.

It belongs to the polysaccharide lyase 8 family. As to quaternary structure, monomer. Ca(2+) serves as cofactor. Mg(2+) is required as a cofactor.

It is found in the periplasm. It carries out the reaction Exolytic removal of Delta(4)-unsaturated disaccharide residues from the non-reducing ends of both polymeric chondroitin/dermatan sulfates and their oligosaccharide fragments.. Its activity is regulated as follows. Specific activity for chondroitin sulfate substrates increases moderately (2-fold) while an increase of 25-fold is observed for dermatan sulfate as substrate upon addition of Ca(2+) or Mg(2+) ions. Increasing the concentration of Na(+), K(+) or Cs(+) chloride from 0 to 0.1 M, increases the activity against all substrates. Further increases in salt concentration reduces the activity dramatically, with 50% inhibition occurring at 0.15 M and nearly complete inhibition at 0.4 M salt. The addition of 10 mM Ca(2+) or Mg(2+) ions increases the activity against chondroitin 4- and 6-sulfates by 2-3-fold, while the activity against dermatan sulfate increases much more significantly by 50-fold. Addition of Mn(2+) and Zn(2+) reduces activity against chondroitin sulfate substrates, but increases the activity against dermatan sulfate. Increasing the concentration of CaCl(2) with both chondroitin 4- and 6-sulfates from 0 to 0.04 M increases the activity. A further increase reduces activity, with 50% inhibition at 0.065-0.085 M and a complete inhibition of the reaction at 0.2 M. In case of dermatan sulfate, the addition of low concentration of CaCl(2) dramatically increases the activity from the basal level. The maximal activity is reached at 0.01 M CaCl(2). Its function is as follows. Broad-specificity glycosaminoglycan lyase, which acts in an exolytic fashion degrading chondroitin sulfates and dermatan sulfate to yield only disaccharide products. Has a preference for chondroitin 4-sulfate over chondroitin 6-sulfate. Has extremely low activity against hyaluronic acid. Is not active against acharan sulfate, heparin or heparan sulfate. The protein is Chondroitin sulfate ABC exolyase (chonabc) of Bacteroides thetaiotaomicron.